Consider the following 337-residue polypeptide: Ribonucleoside-diphosphate reductase small chain (337 aa).

Fe cation is bound by residues aspartate 85, glutamate 116, and histidine 119. The active site involves tyrosine 123. 3 residues coordinate Fe cation: glutamate 178, glutamate 212, and histidine 215.

Belongs to the ribonucleoside diphosphate reductase small chain family. As to quaternary structure, heterodimer of a large and a small subunit. Fe cation serves as cofactor.

It catalyses the reaction a 2'-deoxyribonucleoside 5'-diphosphate + [thioredoxin]-disulfide + H2O = a ribonucleoside 5'-diphosphate + [thioredoxin]-dithiol. In terms of biological role, provides the precursors necessary for DNA synthesis. Catalyzes the biosynthesis of deoxyribonucleotides from the corresponding ribonucleotides. This chain is Ribonucleoside-diphosphate reductase small chain (RNR2), found in Trypanosoma brucei brucei.